We begin with the raw amino-acid sequence, 492 residues long: Phosphatidylglycerol--prolipoprotein diacylglyceryl transferase (492 aa).

A run of 9 helical transmembrane segments spans residues 40–60, 72–92, 106–126, 133–153, 184–204, 214–234, 361–381, 409–429, and 441–461; these read IFGI…YVGW, AIRQ…VVVP, VAVR…VGLA, AGLG…GGLL, QGGL…LIAL, IGDV…LGCL, VWGT…VLLI, GVLM…LEWI, and LSIS…TLFI. Arginine 230 is a binding site for a 1,2-diacyl-sn-glycero-3-phospho-(1'-sn-glycerol).

It belongs to the Lgt family.

It is found in the cell inner membrane. The enzyme catalyses L-cysteinyl-[prolipoprotein] + a 1,2-diacyl-sn-glycero-3-phospho-(1'-sn-glycerol) = an S-1,2-diacyl-sn-glyceryl-L-cysteinyl-[prolipoprotein] + sn-glycerol 1-phosphate + H(+). The protein operates within protein modification; lipoprotein biosynthesis (diacylglyceryl transfer). In terms of biological role, catalyzes the transfer of the diacylglyceryl group from phosphatidylglycerol to the sulfhydryl group of the N-terminal cysteine of a prolipoprotein, the first step in the formation of mature lipoproteins. The sequence is that of Phosphatidylglycerol--prolipoprotein diacylglyceryl transferase from Rhodopirellula baltica (strain DSM 10527 / NCIMB 13988 / SH1).